The following is a 355-amino-acid chain: Cyclin-D1-binding protein 1 (355 aa).

At A2 the chain carries N-acetylalanine. Interaction with TCF3 stretches follow at residues 2-181 (ASST…VDLV) and 147-355 (ISCN…AVEL). Residues 2 to 187 (ASSTTPVSFL…VDLVKDAHEE (186 aa)) are interaction with RPLP0. The interval 2-205 (ASSTTPVSFL…DPYCGLLDDS (204 aa)) is required for interaction with CCND1. Residues 203 to 224 (DDSEDNSDSHHNEDGVGLPSNR) form a disordered region. An interaction with RPLP0 region spans residues 235-355 (LITPCLALVR…KELTQRAVEL (121 aa)).

This sequence belongs to the CCNDBP1 family. As to quaternary structure, interacts with CCND1 and GRAP2. May also interact with COPS5, RPLP0, SIRT6, SYF2 and TCF3. In terms of processing, phosphorylated.

Its subcellular location is the cytoplasm. It is found in the nucleus. May negatively regulate cell cycle progression. May act at least in part via inhibition of the cyclin-D1/CDK4 complex, thereby preventing phosphorylation of RB1 and blocking E2F-dependent transcription. This chain is Cyclin-D1-binding protein 1 (Ccndbp1), found in Rattus norvegicus (Rat).